We begin with the raw amino-acid sequence, 110 residues long: MSISVGLGSYLLVGAMLFCLGLYGVFVKRNIIAILMSIELMLNAVNINFIAFSRFAPWANPGTNPLIGQVAAIFVIVVAAAEIAVGLALVIAIYRNRRTTNVDEFNWLKW.

3 helical membrane passes run 7–27 (LGSYLLVGAMLFCLGLYGVFV), 31–51 (IIAILMSIELMLNAVNINFIA), and 73–93 (IFVIVVAAAEIAVGLALVIAI).

The protein belongs to the complex I subunit 4L family. As to quaternary structure, NDH-1 is composed of 14 different subunits. Subunits NuoA, H, J, K, L, M, N constitute the membrane sector of the complex.

It is found in the cell membrane. It carries out the reaction a quinone + NADH + 5 H(+)(in) = a quinol + NAD(+) + 4 H(+)(out). Its function is as follows. NDH-1 shuttles electrons from NADH, via FMN and iron-sulfur (Fe-S) centers, to quinones in the respiratory chain. The immediate electron acceptor for the enzyme in this species is believed to be a menaquinone. Couples the redox reaction to proton translocation (for every two electrons transferred, four hydrogen ions are translocated across the cytoplasmic membrane), and thus conserves the redox energy in a proton gradient. This Desulfitobacterium hafniense (strain DSM 10664 / DCB-2) protein is NADH-quinone oxidoreductase subunit K.